The following is a 157-amino-acid chain: uncharacterized protein (157 aa).

The stretch at 36-63 (QIEELNELCQFFNISLTYTRESLEELEN) forms a coiled coil.

This is an uncharacterized protein from Bacillus subtilis (strain 168).